The sequence spans 450 residues: Eukaryotic translation initiation factor 3 subunit E (450 aa).

Residues 255–424 (TELFFSPAYI…GTVIMNHPPQ (170 aa)) form the PCI domain.

This sequence belongs to the eIF-3 subunit E family. As to quaternary structure, component of the eukaryotic translation initiation factor 3 (eIF-3) complex.

It localises to the cytoplasm. Functionally, component of the eukaryotic translation initiation factor 3 (eIF-3) complex, which is involved in protein synthesis of a specialized repertoire of mRNAs and, together with other initiation factors, stimulates binding of mRNA and methionyl-tRNAi to the 40S ribosome. The eIF-3 complex specifically targets and initiates translation of a subset of mRNAs involved in cell proliferation. This Aspergillus clavatus (strain ATCC 1007 / CBS 513.65 / DSM 816 / NCTC 3887 / NRRL 1 / QM 1276 / 107) protein is Eukaryotic translation initiation factor 3 subunit E (int6).